The primary structure comprises 369 residues: Anhydro-N-acetylmuramic acid kinase (369 aa).

ATP is bound at residue 12 to 19; it reads GTSMDGVD.

Belongs to the anhydro-N-acetylmuramic acid kinase family.

It catalyses the reaction 1,6-anhydro-N-acetyl-beta-muramate + ATP + H2O = N-acetyl-D-muramate 6-phosphate + ADP + H(+). The protein operates within amino-sugar metabolism; 1,6-anhydro-N-acetylmuramate degradation. Its pathway is cell wall biogenesis; peptidoglycan recycling. Its function is as follows. Catalyzes the specific phosphorylation of 1,6-anhydro-N-acetylmuramic acid (anhMurNAc) with the simultaneous cleavage of the 1,6-anhydro ring, generating MurNAc-6-P. Is required for the utilization of anhMurNAc either imported from the medium or derived from its own cell wall murein, and thus plays a role in cell wall recycling. The chain is Anhydro-N-acetylmuramic acid kinase from Shewanella baltica (strain OS185).